Here is a 287-residue protein sequence, read N- to C-terminus: ATP synthase gamma chain (287 aa).

Belongs to the ATPase gamma chain family. In terms of assembly, F-type ATPases have 2 components, CF(1) - the catalytic core - and CF(0) - the membrane proton channel. CF(1) has five subunits: alpha(3), beta(3), gamma(1), delta(1), epsilon(1). CF(0) has three main subunits: a, b and c.

The protein localises to the cell inner membrane. In terms of biological role, produces ATP from ADP in the presence of a proton gradient across the membrane. The gamma chain is believed to be important in regulating ATPase activity and the flow of protons through the CF(0) complex. The protein is ATP synthase gamma chain of Geotalea daltonii (strain DSM 22248 / JCM 15807 / FRC-32) (Geobacter daltonii).